Here is a 186-residue protein sequence, read N- to C-terminus: Ribosome-recycling factor (186 aa).

Belongs to the RRF family.

Its subcellular location is the cytoplasm. In terms of biological role, responsible for the release of ribosomes from messenger RNA at the termination of protein biosynthesis. May increase the efficiency of translation by recycling ribosomes from one round of translation to another. The polypeptide is Ribosome-recycling factor (Burkholderia multivorans (strain ATCC 17616 / 249)).